The primary structure comprises 160 residues: N-acetyltransferase Pat (160 aa).

The N-acetyltransferase domain maps to 5-148 (IKIRKATKED…VYGEMRLTER (144 aa)). Positions 79, 81, 87, 89, 91, 92, 118, 123, and 127 each coordinate CoA.

Belongs to the acetyltransferase family. GNAT subfamily.

The enzyme catalyses L-lysyl-[protein] + acetyl-CoA = N(6)-acetyl-L-lysyl-[protein] + CoA + H(+). In terms of biological role, modulates activity of albA1, the major archaeal DNA compaction protein, by decreasing albA1's nucleic acid binding affinity through acetylation of 'Lys-16'. In Saccharolobus solfataricus (strain ATCC 35092 / DSM 1617 / JCM 11322 / P2) (Sulfolobus solfataricus), this protein is N-acetyltransferase Pat.